A 425-amino-acid polypeptide reads, in one-letter code: Enolase (425 aa).

The interval 31-54 is disordered; it reads TGSAIVPSGASTGEKEAVELRDSD. Residues 43 to 54 are compositionally biased toward basic and acidic residues; the sequence is GEKEAVELRDSD. Residue Gln162 participates in (2R)-2-phosphoglycerate binding. The active-site Proton donor is Glu204. The Mg(2+) site is built by Asp241, Glu285, and Asp312. Residues Lys337, Arg366, Ser367, and Lys388 each coordinate (2R)-2-phosphoglycerate. The Proton acceptor role is filled by Lys337.

Belongs to the enolase family. The cofactor is Mg(2+).

The protein localises to the cytoplasm. Its subcellular location is the secreted. The protein resides in the cell surface. The catalysed reaction is (2R)-2-phosphoglycerate = phosphoenolpyruvate + H2O. The protein operates within carbohydrate degradation; glycolysis; pyruvate from D-glyceraldehyde 3-phosphate: step 4/5. Its function is as follows. Catalyzes the reversible conversion of 2-phosphoglycerate (2-PG) into phosphoenolpyruvate (PEP). It is essential for the degradation of carbohydrates via glycolysis. This chain is Enolase, found in Gloeobacter violaceus (strain ATCC 29082 / PCC 7421).